The following is a 267-amino-acid chain: tRNA (guanine-N(1)-)-methyltransferase (267 aa).

S-adenosyl-L-methionine is bound by residues glycine 112 and isoleucine 131 to leucine 136. Residues aspartate 245–arginine 259 show a composition bias toward basic and acidic residues. The interval aspartate 245–serine 267 is disordered.

Belongs to the RNA methyltransferase TrmD family. As to quaternary structure, homodimer.

The protein localises to the cytoplasm. It carries out the reaction guanosine(37) in tRNA + S-adenosyl-L-methionine = N(1)-methylguanosine(37) in tRNA + S-adenosyl-L-homocysteine + H(+). Specifically methylates guanosine-37 in various tRNAs. The polypeptide is tRNA (guanine-N(1)-)-methyltransferase (Spiroplasma kunkelii).